Consider the following 124-residue polypeptide: Large ribosomal subunit protein uL18 (124 aa).

The protein belongs to the universal ribosomal protein uL18 family. As to quaternary structure, part of the 50S ribosomal subunit; part of the 5S rRNA/L5/L18/L25 subcomplex. Contacts the 5S and 23S rRNAs.

This is one of the proteins that bind and probably mediate the attachment of the 5S RNA into the large ribosomal subunit, where it forms part of the central protuberance. This chain is Large ribosomal subunit protein uL18, found in Desulfosudis oleivorans (strain DSM 6200 / JCM 39069 / Hxd3) (Desulfococcus oleovorans).